We begin with the raw amino-acid sequence, 868 residues long: DNA mismatch repair protein MutS (868 aa).

ATP is bound at residue 620 to 627 (GPNMGGKS).

The protein belongs to the DNA mismatch repair MutS family.

This protein is involved in the repair of mismatches in DNA. It is possible that it carries out the mismatch recognition step. This protein has a weak ATPase activity. The sequence is that of DNA mismatch repair protein MutS from Xylella fastidiosa (strain 9a5c).